The following is a 367-amino-acid chain: Apurinic-apyrimidinic endonuclease 1 (367 aa).

Zn(2+)-binding residues include His-83, His-123, Glu-158, Asp-192, His-195, His-229, Asp-242, His-244, and Glu-274. Residues Asp-312–Glu-367 are disordered. The span at Ser-321–Lys-332 shows a compositional bias: basic and acidic residues. The segment covering Gln-333 to Lys-344 has biased composition (basic residues). Ser-356 bears the Phosphoserine mark.

Belongs to the AP endonuclease 2 family. As to quaternary structure, monomer. Zn(2+) is required as a cofactor.

The protein localises to the nucleus. Its function is as follows. DNA repair enzyme that cleaves apurinic/apyrimidinic (AP) sites and removes 3'-blocking groups present at single strand breaks of damaged DNA. APN1 accounts for &gt; 97% of both apurinic/apyrimidinic (AP) endonuclease and DNA 3'-repair diesterase activities. This is Apurinic-apyrimidinic endonuclease 1 (APN1) from Saccharomyces cerevisiae (strain ATCC 204508 / S288c) (Baker's yeast).